The primary structure comprises 201 residues: Probable chemoreceptor glutamine deamidase CheD 2 (201 aa).

This sequence belongs to the CheD family.

It carries out the reaction L-glutaminyl-[protein] + H2O = L-glutamyl-[protein] + NH4(+). Functionally, probably deamidates glutamine residues to glutamate on methyl-accepting chemotaxis receptors (MCPs), playing an important role in chemotaxis. This Chromobacterium violaceum (strain ATCC 12472 / DSM 30191 / JCM 1249 / CCUG 213 / NBRC 12614 / NCIMB 9131 / NCTC 9757 / MK) protein is Probable chemoreceptor glutamine deamidase CheD 2.